The primary structure comprises 250 residues: 3-deoxy-manno-octulosonate cytidylyltransferase (250 aa).

This sequence belongs to the KdsB family.

The protein resides in the cytoplasm. It catalyses the reaction 3-deoxy-alpha-D-manno-oct-2-ulosonate + CTP = CMP-3-deoxy-beta-D-manno-octulosonate + diphosphate. It participates in nucleotide-sugar biosynthesis; CMP-3-deoxy-D-manno-octulosonate biosynthesis; CMP-3-deoxy-D-manno-octulosonate from 3-deoxy-D-manno-octulosonate and CTP: step 1/1. The protein operates within bacterial outer membrane biogenesis; lipopolysaccharide biosynthesis. Functionally, activates KDO (a required 8-carbon sugar) for incorporation into bacterial lipopolysaccharide in Gram-negative bacteria. In Bacteroides thetaiotaomicron (strain ATCC 29148 / DSM 2079 / JCM 5827 / CCUG 10774 / NCTC 10582 / VPI-5482 / E50), this protein is 3-deoxy-manno-octulosonate cytidylyltransferase.